A 338-amino-acid polypeptide reads, in one-letter code: DNA-directed RNA polymerase subunit alpha (338 aa).

The interval 1–233 (MLREEVAVST…DLFIPFLHAE (233 aa)) is alpha N-terminal domain (alpha-NTD). The segment at 266–338 (IALKFIFIDQ…IDLPKNKFSN (73 aa)) is alpha C-terminal domain (alpha-CTD).

The protein belongs to the RNA polymerase alpha chain family. In terms of assembly, in plastids the minimal PEP RNA polymerase catalytic core is composed of four subunits: alpha, beta, beta', and beta''. When a (nuclear-encoded) sigma factor is associated with the core the holoenzyme is formed, which can initiate transcription.

The protein localises to the plastid. It is found in the chloroplast. It catalyses the reaction RNA(n) + a ribonucleoside 5'-triphosphate = RNA(n+1) + diphosphate. In terms of biological role, DNA-dependent RNA polymerase catalyzes the transcription of DNA into RNA using the four ribonucleoside triphosphates as substrates. The polypeptide is DNA-directed RNA polymerase subunit alpha (Nandina domestica (Heavenly bamboo)).